A 94-amino-acid polypeptide reads, in one-letter code: Co-chaperonin GroES (94 aa).

It belongs to the GroES chaperonin family. In terms of assembly, heptamer of 7 subunits arranged in a ring. Interacts with the chaperonin GroEL.

It is found in the cytoplasm. Together with the chaperonin GroEL, plays an essential role in assisting protein folding. The GroEL-GroES system forms a nano-cage that allows encapsulation of the non-native substrate proteins and provides a physical environment optimized to promote and accelerate protein folding. GroES binds to the apical surface of the GroEL ring, thereby capping the opening of the GroEL channel. This chain is Co-chaperonin GroES, found in Alkaliphilus metalliredigens (strain QYMF).